The sequence spans 364 residues: Aminomethyltransferase (364 aa).

This sequence belongs to the GcvT family. The glycine cleavage system is composed of four proteins: P, T, L and H.

It catalyses the reaction N(6)-[(R)-S(8)-aminomethyldihydrolipoyl]-L-lysyl-[protein] + (6S)-5,6,7,8-tetrahydrofolate = N(6)-[(R)-dihydrolipoyl]-L-lysyl-[protein] + (6R)-5,10-methylene-5,6,7,8-tetrahydrofolate + NH4(+). Functionally, the glycine cleavage system catalyzes the degradation of glycine. The protein is Aminomethyltransferase of Salmonella enteritidis PT4 (strain P125109).